We begin with the raw amino-acid sequence, 255 residues long: tRNA (guanine-N(1)-)-methyltransferase (255 aa).

Residues Gly-112 and 131-136 contribute to the S-adenosyl-L-methionine site; that span reads LGDYVL.

This sequence belongs to the RNA methyltransferase TrmD family. Homodimer.

It is found in the cytoplasm. It carries out the reaction guanosine(37) in tRNA + S-adenosyl-L-methionine = N(1)-methylguanosine(37) in tRNA + S-adenosyl-L-homocysteine + H(+). In terms of biological role, specifically methylates guanosine-37 in various tRNAs. The polypeptide is tRNA (guanine-N(1)-)-methyltransferase (Lacticaseibacillus paracasei (strain ATCC 334 / BCRC 17002 / CCUG 31169 / CIP 107868 / KCTC 3260 / NRRL B-441) (Lactobacillus paracasei)).